Reading from the N-terminus, the 562-residue chain is Abrin-c (562 aa).

Residues 1–34 form the signal peptide; that stretch reads MDKTLKLLILCLAWTCSFSALRCAARTYPPVATN. Position 35 is a pyrrolidone carboxylic acid (Gln-35). Glu-198 is a catalytic residue. Asn-234 carries an N-linked (GlcNAc...) asparagine glycan. Disulfide bonds link Cys-281-Cys-303, Cys-320-Cys-339, and Cys-363-Cys-380. One can recognise a Ricin B-type lectin 1 domain in the interval 307–434; sequence YEPTVRIGGR…YLMRQGWRTG (128 aa). Residues 317–359 form a 1-alpha repeat; it reads DGMCVDVYDDGYHNGNRIIAWKCKDRLEENQLWTLKSDKTIRS. A 1-beta repeat occupies 360 to 400; sequence NGKCLTTEGYAPGNYVMIYDCTSAVAEATYWEIWDNGTIIN. N-linked (GlcNAc...) asparagine glycans are attached at residues Asn-395 and Asn-435. One copy of the 1-gamma repeat lies at 403-435; that stretch reads SALVLSAESSSMGGTLTVQTNEYLMRQGWRTGN. One can recognise a Ricin B-type lectin 2 domain in the interval 437–561; it reads TSPFVTSISG…GKPNQIWLTL (125 aa). The 2-alpha repeat unit spans residues 448–483; sequence SDLCMQAQGSNVWLADCDNNKKEQQWALYTDGSIRS. 2 disulfide bridges follow: Cys-451–Cys-464 and Cys-490–Cys-507. Residues 487–526 form a 2-beta repeat; that stretch reads TNNCLTSKDHKQGSPIVLMACSNGWASQRWLFKNDGSIYN. One copy of the 2-gamma repeat lies at 529–562; sequence DDMVMDVKRSDPSLKEIILHPYHGKPNQIWLTLF.

It in the N-terminal section; belongs to the ribosome-inactivating protein family. Type 2 RIP subfamily. Disulfide-linked dimer of A and B chains.

It carries out the reaction Endohydrolysis of the N-glycosidic bond at one specific adenosine on the 28S rRNA.. Functionally, the A chain is responsible for inhibiting protein synthesis through the catalytic inactivation of 60S ribosomal subunits by removing adenine from position 4,324 of 28S rRNA. Abrin-a is more toxic than ricin. In terms of biological role, the B chain is a galactose-specific lectin that facilitates the binding of abrin to the cell membrane that precedes endocytosis. In Abrus precatorius (Indian licorice), this protein is Abrin-c.